Consider the following 191-residue polypeptide: 3-isopropylmalate dehydratase small subunit (191 aa).

The protein belongs to the LeuD family. LeuD type 1 subfamily. As to quaternary structure, heterodimer of LeuC and LeuD.

The catalysed reaction is (2R,3S)-3-isopropylmalate = (2S)-2-isopropylmalate. Its pathway is amino-acid biosynthesis; L-leucine biosynthesis; L-leucine from 3-methyl-2-oxobutanoate: step 2/4. In terms of biological role, catalyzes the isomerization between 2-isopropylmalate and 3-isopropylmalate, via the formation of 2-isopropylmaleate. This is 3-isopropylmalate dehydratase small subunit from Anaeromyxobacter dehalogenans (strain 2CP-1 / ATCC BAA-258).